Here is a 542-residue protein sequence, read N- to C-terminus: 2,3-bisphosphoglycerate-independent phosphoglycerate mutase (542 aa).

Asp13 and Ser63 together coordinate Mn(2+). The active-site Phosphoserine intermediate is Ser63. Residues His124, 154 to 155 (RD), Arg186, Arg192, 263 to 266 (RADR), and Lys357 contribute to the substrate site. Mn(2+) is bound by residues Asp424, His428, Asp465, His466, and His484.

This sequence belongs to the BPG-independent phosphoglycerate mutase family. Monomer. The cofactor is Mn(2+).

The catalysed reaction is (2R)-2-phosphoglycerate = (2R)-3-phosphoglycerate. It functions in the pathway carbohydrate degradation; glycolysis; pyruvate from D-glyceraldehyde 3-phosphate: step 3/5. Catalyzes the interconversion of 2-phosphoglycerate and 3-phosphoglycerate. The protein is 2,3-bisphosphoglycerate-independent phosphoglycerate mutase of Herpetosiphon aurantiacus (strain ATCC 23779 / DSM 785 / 114-95).